A 505-amino-acid chain; its full sequence is Glycerol kinase (505 aa).

Residue threonine 12 participates in ADP binding. Threonine 12, threonine 13, and serine 14 together coordinate ATP. Position 12 (threonine 12) interacts with sn-glycerol 3-phosphate. Arginine 16 provides a ligand contact to ADP. 4 residues coordinate sn-glycerol 3-phosphate: arginine 82, glutamate 83, tyrosine 134, and aspartate 249. The glycerol site is built by arginine 82, glutamate 83, tyrosine 134, aspartate 249, and glutamine 250. 2 residues coordinate ADP: threonine 271 and glycine 315. Positions 271, 315, 319, and 416 each coordinate ATP. ADP contacts are provided by glycine 416 and asparagine 420.

Belongs to the FGGY kinase family.

The catalysed reaction is glycerol + ATP = sn-glycerol 3-phosphate + ADP + H(+). It participates in polyol metabolism; glycerol degradation via glycerol kinase pathway; sn-glycerol 3-phosphate from glycerol: step 1/1. Inhibited by fructose 1,6-bisphosphate (FBP). Its function is as follows. Key enzyme in the regulation of glycerol uptake and metabolism. Catalyzes the phosphorylation of glycerol to yield sn-glycerol 3-phosphate. The protein is Glycerol kinase of Mycolicibacterium gilvum (strain PYR-GCK) (Mycobacterium gilvum (strain PYR-GCK)).